Consider the following 705-residue polypeptide: Forkhead box protein P1 (705 aa).

The segment covering 1-19 has biased composition (polar residues); sequence MMQESGSETKSNGSAIQNG. The tract at residues 1–41 is disordered; sequence MMQESGSETKSNGSAIQNGSSGGNHLLECGALRDTRSNGEA. Ser113 bears the Phosphoserine mark. 2 disordered regions span residues 267–286 and 291–326; these read HTAE…TSTC and APSK…EHPH. Composition is skewed to polar residues over residues 276 to 286 and 291 to 311; these read NHSSLDLTSTC and APSK…QLSV. Basic and acidic residues predominate over residues 314–326; the sequence is PKRESLSHEEHPH. Residue Lys315 forms a Glycyl lysine isopeptide (Lys-Gly) (interchain with G-Cter in SUMO2) linkage. The C2H2-type zinc-finger motif lies at 334 to 359; the sequence is GVCKWPGCEAVCDDFPAFLKHLNSEH. The tract at residues 376–397 is leucine-zipper; it reads VQQLELQLAKDKERLQAMMTHL. Residues Lys400 and Lys405 each participate in a glycyl lysine isopeptide (Lys-Gly) (interchain with G-Cter in SUMO2) cross-link. Residues 410 to 414 are CTBP1-binding; it reads PLNLV. The segment covering 418-431 has biased composition (polar residues); sequence TLSKSASEASPQSL. A disordered region spans residues 418 to 450; the sequence is TLSKSASEASPQSLPHTPTTPTAPLTPVTQGPS. The segment covering 432–446 has biased composition (low complexity); that stretch reads PHTPTTPTAPLTPVT. Residue Lys470 forms a Glycyl lysine isopeptide (Lys-Gly) (interchain with G-Cter in SUMO2) linkage. Positions 493 to 583 form a DNA-binding region, fork-head; it reads RPPFTYASLI…PQKISGNPSL (91 aa). The disordered stretch occupies residues 639–705; that stretch reads EHTNSNESDS…EDEPVNEDME (67 aa). Polar residues predominate over residues 640–651; that stretch reads HTNSNESDSSPG. Thr681 bears the Phosphothreonine mark. At Ser686 the chain carries Phosphoserine. A compositionally biased stretch (acidic residues) spans 695 to 705; the sequence is YEDEPVNEDME.

Forms homodimers and heterodimers with FOXP2 and FOXP4. Dimerization is required for DNA-binding. Self-associates. Interacts with CTBP1. Interacts with NCOR2 and AR. Interacts with FOXP2. Interacts with TBR1. Interacts with AURKA; this interaction facilitates the phosphorylation of FOXP1, which suppresses the expression of FBXL7. Interacts with ZMYM2. In terms of tissue distribution, isoform 5 is specifically expressed in embryonic stem cells. Highest expression in the lung, brain, and spleen. Lower expression in heart, skeletal muscle, kidney, small intestine (isoform 3 not present) and liver.

Its subcellular location is the nucleus. Functionally, transcriptional repressor. Can act with CTBP1 to synergistically repress transcription but CTPBP1 is not essential. Plays an important role in the specification and differentiation of lung epithelium. Acts cooperatively with FOXP4 to regulate lung secretory epithelial cell fate and regeneration by restricting the goblet cell lineage program; the function may involve regulation of AGR2. Essential transcriptional regulator of B-cell development. Involved in regulation of cardiac muscle cell proliferation. Involved in the columnar organization of spinal motor neurons. Promotes the formation of the lateral motor neuron column (LMC) and the preganglionic motor column (PGC) and is required for respective appropriate motor axon projections. The segment-appropriate generation of spinal cord motor columns requires cooperation with other Hox proteins. Can regulate PITX3 promoter activity; may promote midbrain identity in embryonic stem cell-derived dopamine neurons by regulating PITX3. Negatively regulates the differentiation of T follicular helper cells T(FH)s. Involved in maintenance of hair follicle stem cell quiescence; the function probably involves regulation of FGF18. Represses transcription of various pro-apoptotic genes and cooperates with NF-kappa B-signaling in promoting B-cell expansion by inhibition of caspase-dependent apoptosis. Binds to CSF1R promoter elements and is involved in regulation of monocyte differentiation and macrophage functions; repression of CSF1R in monocytes seems to involve NCOR2 as corepressor. Involved in endothelial cell proliferation, tube formation and migration indicative for a role in angiogenesis; the role in neovascularization seems to implicate suppression of SEMA5B. Can negatively regulate androgen receptor signaling. Acts as a transcriptional activator of the FBXL7 promoter; this activity is regulated by AURKA. Involved in transcriptional regulation in embryonic stem cells (ESCs). Stimulates expression of transcription factors that are required for pluripotency and decreases expression of differentiation-associated genes. Has distinct DNA-binding specifities as compared to the canonical form and preferentially binds DNA with the sequence 5'-CGATACAA-3' (or closely related sequences). Promotes ESC self-renewal and pluripotency. This Mus musculus (Mouse) protein is Forkhead box protein P1 (Foxp1).